Here is a 333-residue protein sequence, read N- to C-terminus: Transcription initiation factor IIB (333 aa).

The TFIIB-type zinc finger occupies 33–64 (EVYKCPICGNDKFVYNYERGEAVCIVCGAVVQ). 4 residues coordinate Zn(2+): Cys37, Cys40, Cys56, and Cys59. Repeat copies occupy residues 149 to 232 (QELE…LREL) and 243 to 324 (LYIS…ELAK).

It belongs to the TFIIB family.

In terms of biological role, stabilizes TBP binding to an archaeal box-A promoter. Also responsible for recruiting RNA polymerase II to the pre-initiation complex (DNA-TBP-TFIIB). This chain is Transcription initiation factor IIB, found in Pyrobaculum aerophilum (strain ATCC 51768 / DSM 7523 / JCM 9630 / CIP 104966 / NBRC 100827 / IM2).